A 165-amino-acid chain; its full sequence is Cyclic pyranopterin monophosphate synthase (165 aa).

Substrate is bound by residues 76-78 and 114-115; these read LCH and ME. Asp-129 is an active-site residue.

Belongs to the MoaC family. Homohexamer; trimer of dimers.

The catalysed reaction is (8S)-3',8-cyclo-7,8-dihydroguanosine 5'-triphosphate = cyclic pyranopterin phosphate + diphosphate. It participates in cofactor biosynthesis; molybdopterin biosynthesis. Its function is as follows. Catalyzes the conversion of (8S)-3',8-cyclo-7,8-dihydroguanosine 5'-triphosphate to cyclic pyranopterin monophosphate (cPMP). The sequence is that of Cyclic pyranopterin monophosphate synthase from Brucella melitensis biotype 2 (strain ATCC 23457).